Reading from the N-terminus, the 521-residue chain is Adenosylhomocysteinase-like 1 (521 aa).

Positions 1–92 (MNNLADTVVV…EKVQKNSKGS (92 aa)) are disordered. Low complexity predominate over residues 54-73 (RSLSASSTDSFSSASYTGSS). Residues Asp220 and Glu245 each contribute to the substrate site. NAD(+) is bound at residue 246 to 248 (SVT). Substrate is bound by residues Lys275 and Asp279. NAD(+) contacts are provided by residues 311-316 (GDVGKG), Glu332, 388-390 (MGH), Asn435, Lys515, 515-519 (KPNYY), and Tyr519.

The protein belongs to the adenosylhomocysteinase family. As to quaternary structure, interacts with Ahcy; the interaction may negatively regulate Ahcy catalytic activity. The cofactor is NAD(+).

Might play a role in the regulation of methionine metabolism possibly by binding and inactivating Ahcy. In Drosophila melanogaster (Fruit fly), this protein is Adenosylhomocysteinase-like 1.